Here is a 255-residue protein sequence, read N- to C-terminus: MAHIARKRFGQHFLSDGGIIDAIVQEIAPQPGDAMVEIGPGLAALTQPLVERLGRLTVIELDRDLAKRLREHPQLEVIESDVLKVDFAALATRFAAPLRVVGNLPYNISTPILFHLLGFAHLIADQHFMLQKEVIDRMVARPATSDYSRLSVMLQWRYRMENVLFVPPESFDPPPRVDSAVVRMVPLAEPPAVDAARLGEIVQVAFSQRRKIMRHTLGKWLDEHGFAGQFDAQRRAEEVPVAEYVALAQAVPPRP.

S-adenosyl-L-methionine contacts are provided by His-12, Leu-14, Gly-39, Glu-60, Asp-81, and Asn-103.

Belongs to the class I-like SAM-binding methyltransferase superfamily. rRNA adenine N(6)-methyltransferase family. RsmA subfamily.

It is found in the cytoplasm. It catalyses the reaction adenosine(1518)/adenosine(1519) in 16S rRNA + 4 S-adenosyl-L-methionine = N(6)-dimethyladenosine(1518)/N(6)-dimethyladenosine(1519) in 16S rRNA + 4 S-adenosyl-L-homocysteine + 4 H(+). Functionally, specifically dimethylates two adjacent adenosines (A1518 and A1519) in the loop of a conserved hairpin near the 3'-end of 16S rRNA in the 30S particle. May play a critical role in biogenesis of 30S subunits. This Variovorax paradoxus (strain S110) protein is Ribosomal RNA small subunit methyltransferase A.